The following is a 491-amino-acid chain: Cytosolic Fe-S cluster assembly factor NAR1 (491 aa).

The [4Fe-4S] cluster site is built by Cys-20, Cys-59, Cys-62, Cys-65, Cys-177, Cys-231, Cys-412, and Cys-416.

Belongs to the NARF family. As to quaternary structure, interacts with CIA1.

Component of the cytosolic Fe/S protein assembly machinery. Required for maturation of extramitochondrial Fe/S proteins. May play a role in the transfer of pre-assembled Fe/S clusters to target apoproteins. The chain is Cytosolic Fe-S cluster assembly factor NAR1 (NAR1) from Saccharomyces cerevisiae (strain YJM789) (Baker's yeast).